A 427-amino-acid polypeptide reads, in one-letter code: DNA topoisomerase 6 subunit A (427 aa).

The Topo IIA-type catalytic domain occupies 76–209 (LSLSSVQTEI…LNVIAAEKGV (134 aa)). Tyrosine 170 acts as the O-(5'-phospho-DNA)-tyrosine intermediate in catalysis. Positions 256 and 308 each coordinate Mg(2+).

The protein belongs to the TOP6A family. In terms of assembly, homodimer. Heterotetramer of two TOP6A and two TOP6B subunits. Interacts with BIN4 and RHL1. Mg(2+) serves as cofactor. Highly expressed in leaves, stems, flowers and seedlings.

The protein localises to the nucleus. The enzyme catalyses ATP-dependent breakage, passage and rejoining of double-stranded DNA.. Its function is as follows. Component of the DNA topoisomerase VI involved in chromatin organization and progression of endoreduplication cycles. Relaxes both positive and negative superturns and exhibits a strong decatenase activity. Involved in cell-elongation processes. This Arabidopsis thaliana (Mouse-ear cress) protein is DNA topoisomerase 6 subunit A.